Consider the following 374-residue polypeptide: Ribosomal RNA large subunit methyltransferase G (374 aa).

It belongs to the methyltransferase superfamily. RlmG family.

The protein resides in the cytoplasm. It carries out the reaction guanosine(1835) in 23S rRNA + S-adenosyl-L-methionine = N(2)-methylguanosine(1835) in 23S rRNA + S-adenosyl-L-homocysteine + H(+). Specifically methylates the guanine in position 1835 (m2G1835) of 23S rRNA. In Pseudomonas fluorescens (strain Pf0-1), this protein is Ribosomal RNA large subunit methyltransferase G.